Consider the following 109-residue polypeptide: Putative membrane protein insertion efficiency factor (109 aa).

This sequence belongs to the UPF0161 family.

The protein resides in the cell inner membrane. Its function is as follows. Could be involved in insertion of integral membrane proteins into the membrane. This chain is Putative membrane protein insertion efficiency factor, found in Rhodopseudomonas palustris (strain BisA53).